A 159-amino-acid chain; its full sequence is 4-deoxy-4-sulfo-D-erythrose isomerase (159 aa).

C66 (proton acceptor) is an active-site residue.

It belongs to the LacAB/RpiB family.

The catalysed reaction is 4-deoxy-4-sulfo-D-erythrose = 4-deoxy-4-sulfo-D-erythrulose. Its function is as follows. Part of the sulfo-TK pathway, a D-sulfoquinovose degradation pathway that produces 2-hydroxyethane-1-sulfonate (isethionate). Catalyzes the isomerization of 4-deoxy-4-sulfo-D-erythrose (SE) to 4-deoxy-4-sulfo-D-erythrulose (SEu). This is 4-deoxy-4-sulfo-D-erythrose isomerase from Clostridium sp. (strain MSTE9).